Reading from the N-terminus, the 102-residue chain is ATP-dependent Clp protease adapter protein ClpS (102 aa).

Belongs to the ClpS family. As to quaternary structure, binds to the N-terminal domain of the chaperone ClpA.

Functionally, involved in the modulation of the specificity of the ClpAP-mediated ATP-dependent protein degradation. This chain is ATP-dependent Clp protease adapter protein ClpS, found in Wolinella succinogenes (strain ATCC 29543 / DSM 1740 / CCUG 13145 / JCM 31913 / LMG 7466 / NCTC 11488 / FDC 602W) (Vibrio succinogenes).